The primary structure comprises 264 residues: 3-methyl-2-oxobutanoate hydroxymethyltransferase (264 aa).

Positions 45 and 84 each coordinate Mg(2+). 3-methyl-2-oxobutanoate contacts are provided by residues 45 to 46 (DS), D84, and K112. E114 contributes to the Mg(2+) binding site. The active-site Proton acceptor is the E181.

This sequence belongs to the PanB family. In terms of assembly, homodecamer; pentamer of dimers. Mg(2+) serves as cofactor.

Its subcellular location is the cytoplasm. The enzyme catalyses 3-methyl-2-oxobutanoate + (6R)-5,10-methylene-5,6,7,8-tetrahydrofolate + H2O = 2-dehydropantoate + (6S)-5,6,7,8-tetrahydrofolate. It functions in the pathway cofactor biosynthesis; (R)-pantothenate biosynthesis; (R)-pantoate from 3-methyl-2-oxobutanoate: step 1/2. Its function is as follows. Catalyzes the reversible reaction in which hydroxymethyl group from 5,10-methylenetetrahydrofolate is transferred onto alpha-ketoisovalerate to form ketopantoate. The polypeptide is 3-methyl-2-oxobutanoate hydroxymethyltransferase (Shewanella putrefaciens (strain CN-32 / ATCC BAA-453)).